We begin with the raw amino-acid sequence, 430 residues long: Adenylosuccinate synthetase (430 aa).

GTP contacts are provided by residues 12-18 (GDEGKGK) and 40-42 (GHT). The active-site Proton acceptor is the Asp13. Positions 13 and 40 each coordinate Mg(2+). IMP is bound by residues 13-16 (DEGK), 38-41 (NAGH), Thr130, Arg144, Gln224, Thr239, and Arg303. His41 functions as the Proton donor in the catalytic mechanism. 299-305 (VNTGRKR) contributes to the substrate binding site. Residues Arg305, 331–333 (KLD), and 413–415 (STS) each bind GTP.

This sequence belongs to the adenylosuccinate synthetase family. As to quaternary structure, homodimer. Mg(2+) is required as a cofactor.

The protein resides in the cytoplasm. The enzyme catalyses IMP + L-aspartate + GTP = N(6)-(1,2-dicarboxyethyl)-AMP + GDP + phosphate + 2 H(+). The protein operates within purine metabolism; AMP biosynthesis via de novo pathway; AMP from IMP: step 1/2. Functionally, plays an important role in the de novo pathway of purine nucleotide biosynthesis. Catalyzes the first committed step in the biosynthesis of AMP from IMP. The chain is Adenylosuccinate synthetase from Rhodopseudomonas palustris (strain BisB18).